The chain runs to 247 residues: Adenylate kinase (247 aa).

42–47 (GAGKGT) lines the ATP pocket. The segment at 62-91 (ATGDMLRAQVTAKTELGVQAKKIMDQGGLV) is NMP. Residues Thr-63, Arg-68, 89 to 91 (GLV), 118 to 121 (GFPR), and Gln-125 contribute to the AMP site. Positions 159-196 (GRLVHPASGRSYHKLFNPPKKEMTDDQTGEPLVQRSDD) are LID. ATP-binding positions include Arg-160 and 169-170 (SY). The tract at residues 169–191 (SYHKLFNPPKKEMTDDQTGEPLV) is disordered. Residues Arg-193 and Arg-204 each coordinate AMP. Gln-232 provides a ligand contact to ATP.

The protein belongs to the adenylate kinase family. AK2 subfamily. As to quaternary structure, monomer.

It localises to the cytoplasm. Its subcellular location is the cytosol. The protein resides in the mitochondrion intermembrane space. It carries out the reaction AMP + ATP = 2 ADP. Its function is as follows. Catalyzes the reversible transfer of the terminal phosphate group between ATP and AMP. Plays an important role in cellular energy homeostasis and in adenine nucleotide metabolism. Adenylate kinase activity is critical for regulation of the phosphate utilization and the AMP de novo biosynthesis pathways. This is Adenylate kinase from Meyerozyma guilliermondii (strain ATCC 6260 / CBS 566 / DSM 6381 / JCM 1539 / NBRC 10279 / NRRL Y-324) (Yeast).